The primary structure comprises 738 residues: Glucan 1,4-alpha-glucosidase SusB (738 aa).

The signal sequence occupies residues 1–21 (MKKRKILSLIAFLCISFIANA). A Ca(2+)-binding site is contributed by Glu194. Substrate-binding positions include 215–217 (PNS), 437–439 (HHE), and 507–508 (HE). Residues Glu508, Glu526, and Glu532 each contribute to the Ca(2+) site. Catalysis depends on Glu532, which acts as the Proton donor/acceptor.

This sequence belongs to the glycosyl hydrolase 97 family. Monomer. Ca(2+) serves as cofactor.

Its subcellular location is the periplasm. The catalysed reaction is Hydrolysis of terminal (1-&gt;4)-linked alpha-D-glucose residues successively from non-reducing ends of the chains with release of beta-D-glucose.. It functions in the pathway glycan degradation; starch degradation. Functionally, glucoamylase that hydrolyzes alpha-1,4-glucosidic linkages, alpha-1,6-, alpha-1,3- and alpha-1,2-glucosidic linkages during starch degradation. This chain is Glucan 1,4-alpha-glucosidase SusB (susB), found in Bacteroides thetaiotaomicron (strain ATCC 29148 / DSM 2079 / JCM 5827 / CCUG 10774 / NCTC 10582 / VPI-5482 / E50).